The sequence spans 520 residues: GMP synthase [glutamine-hydrolyzing] (520 aa).

The Glutamine amidotransferase type-1 domain maps to 9–202 (TILIIDFGSQ…VHRIVGVKPG (194 aa)). C86 acts as the Nucleophile in catalysis. Catalysis depends on residues H176 and E178. The region spanning 203–395 (WTMGAYREQA…LGLPDSFIGR (193 aa)) is the GMPS ATP-PPase domain. An ATP-binding site is contributed by 230–236 (SGGVDSS).

Homodimer.

It catalyses the reaction XMP + L-glutamine + ATP + H2O = GMP + L-glutamate + AMP + diphosphate + 2 H(+). Its pathway is purine metabolism; GMP biosynthesis; GMP from XMP (L-Gln route): step 1/1. Its function is as follows. Catalyzes the synthesis of GMP from XMP. This is GMP synthase [glutamine-hydrolyzing] from Brucella canis (strain ATCC 23365 / NCTC 10854 / RM-666).